The primary structure comprises 57 residues: Conotoxin reg3.17 (57 aa).

The signal sequence occupies residues 1-16 (TICLLLFPLTVVPLDG). Positions 17-44 (DQPAHQPAVRKHNIKSAVQLRQWDEEQQ) are excised as a propeptide. Intrachain disulfides connect C45–C57, C46–C53, and C50–C56.

It belongs to the conotoxin M superfamily. As to expression, expressed by the venom duct.

The protein resides in the secreted. The chain is Conotoxin reg3.17 from Conus regius (Crown cone).